The chain runs to 142 residues: Large ribosomal subunit protein uL11 (142 aa).

Belongs to the universal ribosomal protein uL11 family. Part of the ribosomal stalk of the 50S ribosomal subunit. Interacts with L10 and the large rRNA to form the base of the stalk. L10 forms an elongated spine to which L12 dimers bind in a sequential fashion forming a multimeric L10(L12)X complex. Post-translationally, one or more lysine residues are methylated.

Forms part of the ribosomal stalk which helps the ribosome interact with GTP-bound translation factors. The polypeptide is Large ribosomal subunit protein uL11 (Cronobacter sakazakii (strain ATCC BAA-894) (Enterobacter sakazakii)).